A 648-amino-acid chain; its full sequence is Centrosomal protein of 63 kDa-B (648 aa).

Coiled-coil stretches lie at residues 19–188 (DSCE…QSHN) and 222–555 (EEEL…DAAS). Phosphoserine; by atm and atr is present on S559. Residues 611–644 (FLQEEEQRSHELLQRLNAHIEELKQESQRTVEHF) adopt a coiled-coil conformation.

It belongs to the CEP63 family. Post-translationally, phosphorylation at Ser-559 by atm and atr promotes its delocalization from the centrosome and impairs its ability to promote centrosome dependent spindle assembly.

The protein resides in the cytoplasm. It localises to the cytoskeleton. The protein localises to the microtubule organizing center. It is found in the centrosome. Its subcellular location is the centriole. Functionally, required for normal spindle assembly. Plays a key role in mother-centriole-dependent centriole duplication. Plays a role in DNA damage response. Following DNA damage, such as double-strand breaks (DSBs), is removed from centrosomes; this leads to the inactivation of spindle assembly and delay in mitotic progression. This is Centrosomal protein of 63 kDa-B (cep63-b) from Xenopus laevis (African clawed frog).